The chain runs to 505 residues: E3 SUMO-protein ligase PIAS4-A (505 aa).

One can recognise an SAP domain in the interval 12–46 (VKSFRVSDLQTLLASMGRSKSGLKQDLVGRALRLV). The LXXLL motif motif lies at 20 to 24 (LQTLL). K35 participates in a covalent cross-link: Glycyl lysine isopeptide (Lys-Gly) (interchain with G-Cter in SUMO); alternate. Residue K35 forms a Glycyl lysine isopeptide (Lys-Gly) (interchain with G-Cter in SUMO2); alternate linkage. Glycyl lysine isopeptide (Lys-Gly) (interchain with G-Cter in SUMO2) cross-links involve residues K56 and K68. The PINIT domain occupies 104–264 (GIPKPAPPPA…SVAVYLVRVF (161 aa)). An SP-RING-type zinc finger spans residues 296 to 381 (PESEIATTGL…LKETPEDVEE (86 aa)). Residues C327, H329, C350, and C353 each coordinate Zn(2+). The tract at residues 374–505 (ETPEDVEEIE…DYDKDLVTAY (132 aa)) is required for nuclear localization. Basic and acidic residues predominate over residues 395–407 (DDKEKERERENSR). Positions 395 to 505 (DDKEKERERE…DYDKDLVTAY (111 aa)) are disordered. Residues 437-457 (SGSGGASAGTGSTSGGSGGGT) show a composition bias toward gly residues. Residues 462–485 (TLDDSSEEEGGGGAEDSEETDDSQ) are compositionally biased toward acidic residues. The span at 493–505 (GRYDYDKDLVTAY) shows a compositional bias: basic and acidic residues.

This sequence belongs to the PIAS family. In terms of processing, sumoylated. Lys-35 is the main site of sumoylation. As to expression, highly expressed in spleen, liver, and brain. Expressed at lower levels in heart, intestine, kidney, gill, skin, and muscle.

It is found in the nucleus. It carries out the reaction S-ubiquitinyl-[E2 ubiquitin-conjugating enzyme]-L-cysteine + [acceptor protein]-L-lysine = [E2 ubiquitin-conjugating enzyme]-L-cysteine + N(6)-ubiquitinyl-[acceptor protein]-L-lysine.. Its pathway is protein modification; protein sumoylation. Its function is as follows. Functions as an E3-type small ubiquitin-like modifier (SUMO) ligase. May play a role as a transcriptional coregulator in various cellular pathways. Catalyzes conjugation of SUMO2 to KAT5 in response to DNA damage, facilitating repair of DNA double-strand breaks (DSBs) via homologous recombination (HR). Mediates sumoylation of PARP1 in response to PARP1 trapping to chromatin. Negatively regulates induction of interferon phi 1 (ifnphi1) mediated by mavs and ticam1/trif. Also inhibits ifnphi1-mediated activation of the interferon-stimulated genes (ISGs) pkz and cd40, and to a lesser extent rsad2 and isg15. May inhibit ticam1/trif-mediated activation of NF-kappa-B. This chain is E3 SUMO-protein ligase PIAS4-A, found in Danio rerio (Zebrafish).